A 308-amino-acid chain; its full sequence is MITVVGSGRVGATTAAMLGVLGVDNKIVLIDIIKGLPQGEALDLNHMSSILGLDVYYTGSNDYADMKGSDLVIVTAGLARKPGMTREQLLEQNAQIVANIGKEIAKYAPDSVVILTTNPLDAMTYVMWRATGFSRERVVGFSGVLDGGRLAFYAGQKLGISPASIIPIVLGQHGESMFPVPSKSFVFGVPLDKLLKPEEIKEAVEETVKAGARITELRGFSSNWAPGAGVAIMAKAVKRDERRALIASVVLDGEYGVRGIPVEVPVVLGRGGAIKVLEVELSPEEKQRFQQSVEAISKLLNSLPAQYK.

NAD(+)-binding positions include 6–11 (GSGRVG) and Asp31. Residues Arg80 and Arg86 each contribute to the substrate site. NAD(+) contacts are provided by residues Asn93 and 116-118 (TTN). Substrate-binding residues include Asn118 and Arg149. His173 functions as the Proton acceptor in the catalytic mechanism.

This sequence belongs to the LDH/MDH superfamily.

The catalysed reaction is (S)-malate + NAD(+) = oxaloacetate + NADH + H(+). Its function is as follows. Catalyzes the reversible oxidation of malate to oxaloacetate. This is Malate dehydrogenase (mdh) from Thermoproteus tenax (strain ATCC 35583 / DSM 2078 / JCM 9277 / NBRC 100435 / Kra 1).